Here is a 60-residue protein sequence, read N- to C-terminus: Cytotoxin 2 (60 aa).

4 disulfide bridges follow: Cys3-Cys21, Cys14-Cys38, Cys42-Cys53, and Cys54-Cys59.

This sequence belongs to the three-finger toxin family. Short-chain subfamily. Type IA cytotoxin sub-subfamily. As to quaternary structure, monomer in solution; Homodimer and oligomer in the presence of negatively charged lipids forming a pore with a size ranging between 20 and 30 Angstroms. In terms of tissue distribution, expressed by the venom gland.

It is found in the secreted. Its subcellular location is the target cell membrane. Its function is as follows. This three-finger cytotoxin is a basic protein that interacts and penetrates into the cell membrane, with the tips of all the three loops. Cytotoxins which have a Pro-30 (P-type) interacts with membrane stronger that those which have a 'Ser-28' (S-type). CTII interacts with membrane stronger than CTI. This is Cytotoxin 2 from Naja oxiana (Central Asian cobra).